The following is a 215-amino-acid chain: Probable GTP-binding protein EngB (215 aa).

The EngB-type G domain maps to 30 to 204; the sequence is EGLEVAFAGR…QMVLAQWLGL (175 aa). GTP contacts are provided by residues 38–45, 64–68, 82–85, 149–152, and 182–185; these read GRSNAGKS, GRTQL, DLPG, TKAD, and LFSA. Mg(2+) is bound by residues Ser45 and Thr66.

The protein belongs to the TRAFAC class TrmE-Era-EngA-EngB-Septin-like GTPase superfamily. EngB GTPase family. It depends on Mg(2+) as a cofactor.

Necessary for normal cell division and for the maintenance of normal septation. This chain is Probable GTP-binding protein EngB, found in Pseudomonas aeruginosa (strain ATCC 15692 / DSM 22644 / CIP 104116 / JCM 14847 / LMG 12228 / 1C / PRS 101 / PAO1).